Here is a 398-residue protein sequence, read N- to C-terminus: tRNA-specific 2-thiouridylase MnmA (398 aa).

ATP contacts are provided by residues 20 to 27 (AMSGGVDS) and Leu46. Cys114 acts as the Nucleophile in catalysis. A disulfide bond links Cys114 and Cys210. Position 138 (Gly138) interacts with ATP. Residues 160-162 (RDQ) form an interaction with tRNA region. Cys210 functions as the Cysteine persulfide intermediate in the catalytic mechanism.

It belongs to the MnmA/TRMU family.

The protein localises to the cytoplasm. The enzyme catalyses S-sulfanyl-L-cysteinyl-[protein] + uridine(34) in tRNA + AH2 + ATP = 2-thiouridine(34) in tRNA + L-cysteinyl-[protein] + A + AMP + diphosphate + H(+). Catalyzes the 2-thiolation of uridine at the wobble position (U34) of tRNA, leading to the formation of s(2)U34. The protein is tRNA-specific 2-thiouridylase MnmA of Brucella abortus (strain S19).